A 181-amino-acid polypeptide reads, in one-letter code: Large ribosomal subunit protein uL10 (181 aa).

The protein belongs to the universal ribosomal protein uL10 family. As to quaternary structure, part of the ribosomal stalk of the 50S ribosomal subunit. The N-terminus interacts with L11 and the large rRNA to form the base of the stalk. The C-terminus forms an elongated spine to which L12 dimers bind in a sequential fashion forming a multimeric L10(L12)X complex.

Functionally, forms part of the ribosomal stalk, playing a central role in the interaction of the ribosome with GTP-bound translation factors. The sequence is that of Large ribosomal subunit protein uL10 from Amoebophilus asiaticus (strain 5a2).